The primary structure comprises 535 residues: Dimethylaniline monooxygenase [N-oxide-forming] 2 (535 aa).

N-acetylalanine is present on alanine 2. FAD contacts are provided by residues 9 to 13, glutamate 32, 40 to 41, and 61 to 62; these read GAGVS, LW, and NT. Residues 60–61 and 195–198 each bind NADP(+); these read TN and SASD. A Glycyl lysine isopeptide (Lys-Gly) (interchain with G-Cter in SUMO) cross-link involves residue lysine 492. A helical transmembrane segment spans residues 510-530; it reads FPVSFLLKFLGLFALVLAFLF.

This sequence belongs to the FMO family. The cofactor is FAD. It depends on Mg(2+) as a cofactor. Lung.

The protein resides in the microsome membrane. It localises to the endoplasmic reticulum membrane. The catalysed reaction is N,N-dimethylaniline + NADPH + O2 + H(+) = N,N-dimethylaniline N-oxide + NADP(+) + H2O. In terms of biological role, catalyzes the oxidative metabolism of numerous xenobiotics, including mainly therapeutic drugs and insecticides that contain a soft nucleophile, most commonly nitrogen and sulfur and participates to their bioactivation. Most drug substrates are tertiary amines such as prochlorperazine and trifluoperazine which are N-oxygenated to form the N-oxide, or sulfides such as thiourea and ethionamide, which are S-oxygenated to the sulfoxide. Others include primary alkylamines such as N-dodecylamine and octan-1-amine that are sequentially monooxygenated to oximes through intermediate hydroxylamines and both steps are NADPH- and oxygen-dependent. Also metabolized N-Deacetyl ketoconazole (DAK) to N-hydroxy-DAK and appears to further metabolizes N-hydroxy-DAK to two others metabolites. Also catalyzes S-oxygenation of the thioether-containing organophosphate insecticides, phorate and disulfoton. The polypeptide is Dimethylaniline monooxygenase [N-oxide-forming] 2 (Oryctolagus cuniculus (Rabbit)).